Here is a 620-residue protein sequence, read N- to C-terminus: 1-deoxy-D-xylulose-5-phosphate synthase (620 aa).

Thiamine diphosphate is bound by residues histidine 80 and 121 to 123 (GHS). Aspartate 152 lines the Mg(2+) pocket. Thiamine diphosphate contacts are provided by residues 153–154 (GA), asparagine 181, tyrosine 288, and glutamate 370. Asparagine 181 contributes to the Mg(2+) binding site.

Belongs to the transketolase family. DXPS subfamily. As to quaternary structure, homodimer. It depends on Mg(2+) as a cofactor. Thiamine diphosphate serves as cofactor.

It carries out the reaction D-glyceraldehyde 3-phosphate + pyruvate + H(+) = 1-deoxy-D-xylulose 5-phosphate + CO2. It functions in the pathway metabolic intermediate biosynthesis; 1-deoxy-D-xylulose 5-phosphate biosynthesis; 1-deoxy-D-xylulose 5-phosphate from D-glyceraldehyde 3-phosphate and pyruvate: step 1/1. Catalyzes the acyloin condensation reaction between C atoms 2 and 3 of pyruvate and glyceraldehyde 3-phosphate to yield 1-deoxy-D-xylulose-5-phosphate (DXP). This chain is 1-deoxy-D-xylulose-5-phosphate synthase, found in Shigella flexneri.